A 174-amino-acid chain; its full sequence is Co-chaperone protein HscB homolog (174 aa).

The 73-residue stretch at 2-74 folds into the J domain; the sequence is NYFNLFNFTP…LRRAEHLLSL (73 aa).

Belongs to the HscB family. Interacts with HscA and stimulates its ATPase activity.

In terms of biological role, co-chaperone involved in the maturation of iron-sulfur cluster-containing proteins. Seems to help targeting proteins to be folded toward HscA. The sequence is that of Co-chaperone protein HscB homolog from Shewanella denitrificans (strain OS217 / ATCC BAA-1090 / DSM 15013).